We begin with the raw amino-acid sequence, 382 residues long: uncharacterized protein (382 aa).

Transmembrane regions (helical) follow at residues 14–34 (GLLL…LWLA), 45–65 (VVSS…GYVI), 79–99 (FIFA…SWLA), 102–122 (FVAG…LMCS), 131–151 (LLAA…LLVS), 157–177 (LMSV…PLLF), 204–224 (LGVN…GLMP), 235–255 (ASIG…QWPI), 270–290 (VQVF…AMAP), 291–311 (ALFI…AWAC), 325–345 (ALLL…AMLM), and 348–368 (FSDN…LLML).

This sequence belongs to the major facilitator superfamily. YcaD (TC 2.A.1.26) family.

The protein localises to the cell inner membrane. This is an uncharacterized protein from Shigella sonnei (strain Ss046).